An 894-amino-acid polypeptide reads, in one-letter code: MKMSEQLSDRYNPADVESRTYEWWEKNGYFKAQDQSTKPPFSIILPPPNVTGFLHMGHALDHTIQDMMIRWKRMNGYNTMWLPGTDHAGIATQSVVERELKKDGVTRHDLGREKFVEKVWDWKHQYGNRIYGQMRRLGDSCDWDRAVFTLDEGVSKAVRKVFVSLHKKGLIYRGQRLVNWSGPLETAISDLEVEHKQIKGSLYHVKYPLEDGSGFLVVATTRPETMLGDSAVCVHPEDERYKHLIGKNVLLPLTNRKIKIIADTYVDKEFGSGVVKITPAHDFNDYKIGKTHNLEFINILTKKAEINENGGVYAGLKVQEARKRILEDLKAQDLLEKEEPHVHSVGHCSRSGAVVEPYLSEQWFVKMEALAVPAKRVAENGTIRFEPESWTKVYLHWLNNIEDWCISRQLWWGHRIPVWYCEDCNHQTVAETDVTACEKCGSTKLHQDDDVLDTWFSSALWPFSTMGWPNETETLKTFYPTSYLVTGHDIIFFWVARMIMMGLEFQRDVPFRTVYIHGLVRDSQGRKMSKSLGNSIDPVEMIEKHGADALRFTFAAHLYSGKDFKFSEQRLEGYRNFMNKVWNAARFALSNLSDFKAPTEGVKALPNKVHISVFDQWIITKLEEVTKTVEEAMEQERFSDASTALYQFIWNQFCDWYIEFTKPILNGNNAEEKAATQLVIAQVLNRIMRLLHPFAPFISEEIYQKLPIKGTACIVDQYPNARNDKEFLSLGSAQAALEIDIVKEVITAIRNIRGENRISPAVKLNVRLGVTNDQTQKILGNNRTALMTMGRLENMEIGPEGDMMKCAVAPVVVKDASVKVIIPLEGLVDFDEEVKRINKSIEKLTRDIGMLSGKLSNEKFVANADEEVVAADRALLAQSKVQLDSLRDALTRFQ.

Residues Pro48–His58 carry the 'HIGH' region motif. Positions Lys527–Ser531 match the 'KMSKS' region motif. Lys530 is a binding site for ATP. Positions Leu827–Ser852 form a coiled coil.

The protein belongs to the class-I aminoacyl-tRNA synthetase family. ValS type 1 subfamily. Monomer.

It is found in the cytoplasm. It carries out the reaction tRNA(Val) + L-valine + ATP = L-valyl-tRNA(Val) + AMP + diphosphate. Catalyzes the attachment of valine to tRNA(Val). As ValRS can inadvertently accommodate and process structurally similar amino acids such as threonine, to avoid such errors, it has a 'posttransfer' editing activity that hydrolyzes mischarged Thr-tRNA(Val) in a tRNA-dependent manner. This chain is Valine--tRNA ligase, found in Bdellovibrio bacteriovorus (strain ATCC 15356 / DSM 50701 / NCIMB 9529 / HD100).